A 570-amino-acid chain; its full sequence is Protein NRT1/ PTR FAMILY 8.1 (570 aa).

Phosphothreonine is present on Thr98. A run of 10 helical transmembrane segments spans residues 99 to 119, 140 to 160, 182 to 202, 210 to 230, 329 to 349, 377 to 397, 414 to 434, 454 to 474, 494 to 514, and 537 to 557; these read IATFVFIYVSGMTLLTLSASV, AVFFVALYMIALGTGGIKPCV, FFNWFYFSINVGALIAATVLV, WGWGFGVPTVAMVIAVCFFFF, IITLLPVWATGIVFATVYSQM, LFDTVSVLFWTPVYDQFIIPL, MGIGLVVSIFAMITAGVLEVV, IFWQIPQYLLIGCAEVFTFIG, LSLTTVALGNYLSTVLVTVVM, and YFFYLLATLSFLNFLVYLWIS.

This sequence belongs to the major facilitator superfamily. Proton-dependent oligopeptide transporter (POT/PTR) (TC 2.A.17) family. As to expression, expressed in cotyledons, hypocotyls, leaves, roots, flowers, pistils and vascular tissue of sepals, anthers, carpels and funiculi. Not detected in seeds.

The protein resides in the cell membrane. Functionally, peptide transporter. Mediates the transport of di- and tripeptides. High affinity transporter with low selectivity. No transport of amino acids. The sequence is that of Protein NRT1/ PTR FAMILY 8.1 (NPF8.1) from Arabidopsis thaliana (Mouse-ear cress).